A 331-amino-acid polypeptide reads, in one-letter code: tRNA N6-adenosine threonylcarbamoyltransferase (331 aa).

The Fe cation site is built by His108 and His112. Substrate-binding positions include 129–133 (LVSGG), Asp161, Glu178, and Ser258. Asp286 is a Fe cation binding site.

Belongs to the KAE1 / TsaD family. Fe(2+) serves as cofactor.

The protein localises to the cytoplasm. It carries out the reaction L-threonylcarbamoyladenylate + adenosine(37) in tRNA = N(6)-L-threonylcarbamoyladenosine(37) in tRNA + AMP + H(+). In terms of biological role, required for the formation of a threonylcarbamoyl group on adenosine at position 37 (t(6)A37) in tRNAs that read codons beginning with adenine. Is probably involved in the transfer of the threonylcarbamoyl moiety of threonylcarbamoyl-AMP (TC-AMP) to the N6 group of A37. The sequence is that of tRNA N6-adenosine threonylcarbamoyltransferase from Caldivirga maquilingensis (strain ATCC 700844 / DSM 13496 / JCM 10307 / IC-167).